Consider the following 178-residue polypeptide: uncharacterized protein (178 aa).

The protein to E.coli YrdD.

This is an uncharacterized protein from Haemophilus influenzae (strain ATCC 51907 / DSM 11121 / KW20 / Rd).